We begin with the raw amino-acid sequence, 97 residues long: UPF0235 protein Daro_3887 (97 aa).

Belongs to the UPF0235 family.

This Dechloromonas aromatica (strain RCB) protein is UPF0235 protein Daro_3887.